The primary structure comprises 209 residues: Orotate phosphoribosyltransferase (209 aa).

Residues R96, K100, H102, and 122 to 130 contribute to the 5-phospho-alpha-D-ribose 1-diphosphate site; that span reads EDLISTGGS. Residue S126 participates in orotate binding.

This sequence belongs to the purine/pyrimidine phosphoribosyltransferase family. PyrE subfamily. In terms of assembly, homodimer. Requires Mg(2+) as cofactor.

The enzyme catalyses orotidine 5'-phosphate + diphosphate = orotate + 5-phospho-alpha-D-ribose 1-diphosphate. It participates in pyrimidine metabolism; UMP biosynthesis via de novo pathway; UMP from orotate: step 1/2. Its function is as follows. Catalyzes the transfer of a ribosyl phosphate group from 5-phosphoribose 1-diphosphate to orotate, leading to the formation of orotidine monophosphate (OMP). The polypeptide is Orotate phosphoribosyltransferase (Streptococcus agalactiae serotype III (strain NEM316)).